The following is a 227-amino-acid chain: Protein GrpE (227 aa).

Residues 1–18 are compositionally biased toward polar residues; it reads MTQGNQKTEGNPPEQVTV. Disordered stretches follow at residues 1–57 and 193–227; these read MTQG…GAAT and TEEG…ASGD. The span at 19 to 35 shows a compositional bias: basic and acidic residues; sequence TDKRRIDPETGEVRHVP. Low complexity-rich tracts occupy residues 41-50 and 199-213; these read GGTAPQAATA and EAAA…AAET.

Belongs to the GrpE family. Homodimer.

It is found in the cytoplasm. Participates actively in the response to hyperosmotic and heat shock by preventing the aggregation of stress-denatured proteins, in association with DnaK and GrpE. It is the nucleotide exchange factor for DnaK and may function as a thermosensor. Unfolded proteins bind initially to DnaJ; upon interaction with the DnaJ-bound protein, DnaK hydrolyzes its bound ATP, resulting in the formation of a stable complex. GrpE releases ADP from DnaK; ATP binding to DnaK triggers the release of the substrate protein, thus completing the reaction cycle. Several rounds of ATP-dependent interactions between DnaJ, DnaK and GrpE are required for fully efficient folding. The protein is Protein GrpE of Mycolicibacterium paratuberculosis (strain ATCC BAA-968 / K-10) (Mycobacterium paratuberculosis).